The following is a 367-amino-acid chain: NADH-quinone oxidoreductase subunit D (367 aa).

This sequence belongs to the complex I 49 kDa subunit family. NDH-1 is composed of 14 different subunits. Subunits NuoB, C, D, E, F, and G constitute the peripheral sector of the complex.

It is found in the cell membrane. The enzyme catalyses a quinone + NADH + 5 H(+)(in) = a quinol + NAD(+) + 4 H(+)(out). Functionally, NDH-1 shuttles electrons from NADH, via FMN and iron-sulfur (Fe-S) centers, to quinones in the respiratory chain. The immediate electron acceptor for the enzyme in this species is believed to be ubiquinone. Couples the redox reaction to proton translocation (for every two electrons transferred, four hydrogen ions are translocated across the cytoplasmic membrane), and thus conserves the redox energy in a proton gradient. The sequence is that of NADH-quinone oxidoreductase subunit D from Dehalococcoides mccartyi (strain ATCC BAA-2266 / KCTC 15142 / 195) (Dehalococcoides ethenogenes (strain 195)).